The following is a 156-amino-acid chain: Small ribosomal subunit protein uS7 (156 aa).

It belongs to the universal ribosomal protein uS7 family. Part of the 30S ribosomal subunit. Contacts proteins S9 and S11.

In terms of biological role, one of the primary rRNA binding proteins, it binds directly to 16S rRNA where it nucleates assembly of the head domain of the 30S subunit. Is located at the subunit interface close to the decoding center, probably blocks exit of the E-site tRNA. The sequence is that of Small ribosomal subunit protein uS7 from Azorhizobium caulinodans (strain ATCC 43989 / DSM 5975 / JCM 20966 / LMG 6465 / NBRC 14845 / NCIMB 13405 / ORS 571).